Here is a 131-residue protein sequence, read N- to C-terminus: Small ribosomal subunit protein uS9 (131 aa).

The protein belongs to the universal ribosomal protein uS9 family.

The chain is Small ribosomal subunit protein uS9 from Actinobacillus pleuropneumoniae serotype 5b (strain L20).